A 337-amino-acid chain; its full sequence is Biotin synthase (337 aa).

In terms of domain architecture, Radical SAM core spans 55-284 (YFKNTIELCS…KKTILLAGGK (230 aa)). 3 residues coordinate [4Fe-4S] cluster: Cys73, Cys77, and Cys80. Residues Cys117, Cys149, and Cys209 each coordinate [2Fe-2S] cluster.

The protein belongs to the radical SAM superfamily. Biotin synthase family. As to quaternary structure, homodimer. [4Fe-4S] cluster serves as cofactor. The cofactor is [2Fe-2S] cluster.

It catalyses the reaction (4R,5S)-dethiobiotin + (sulfur carrier)-SH + 2 reduced [2Fe-2S]-[ferredoxin] + 2 S-adenosyl-L-methionine = (sulfur carrier)-H + biotin + 2 5'-deoxyadenosine + 2 L-methionine + 2 oxidized [2Fe-2S]-[ferredoxin]. Its pathway is cofactor biosynthesis; biotin biosynthesis; biotin from 7,8-diaminononanoate: step 2/2. Functionally, catalyzes the conversion of dethiobiotin (DTB) to biotin by the insertion of a sulfur atom into dethiobiotin via a radical-based mechanism. The polypeptide is Biotin synthase (Caldicellulosiruptor bescii (strain ATCC BAA-1888 / DSM 6725 / KCTC 15123 / Z-1320) (Anaerocellum thermophilum)).